The following is a 385-amino-acid chain: Flap endonuclease 1 (385 aa).

The segment at 1 to 104 (MGILGLSKLI…GELAKRAERR (104 aa)) is N-domain. Mg(2+) is bound at residue aspartate 34. Positions 47 and 70 each coordinate DNA. Residues aspartate 86, glutamate 158, glutamate 160, aspartate 179, and aspartate 181 each contribute to the Mg(2+) site. The interval 122-253 (GIEKFNRRLV…KRAIELINTY (132 aa)) is I-domain. Glutamate 158 lines the DNA pocket. Residues glycine 231 and aspartate 233 each coordinate DNA. Aspartate 233 contacts Mg(2+). Residues 336–344 (TQVRLDSFF) form an interaction with PCNA region. A disordered region spans residues 346–385 (TLPSTPNATNAAKRKAEEAKKSANNKKAKTSGGGRGRRPK). A compositionally biased stretch (basic residues) spans 368–385 (ANNKKAKTSGGGRGRRPK).

Belongs to the XPG/RAD2 endonuclease family. FEN1 subfamily. In terms of assembly, interacts with PCNA. Three molecules of FEN1 bind to one PCNA trimer with each molecule binding to one PCNA monomer. PCNA stimulates the nuclease activity without altering cleavage specificity. The cofactor is Mg(2+). In terms of processing, phosphorylated. Phosphorylation upon DNA damage induces relocalization to the nuclear plasma.

Its subcellular location is the nucleus. The protein localises to the nucleolus. It is found in the nucleoplasm. It localises to the mitochondrion. In terms of biological role, structure-specific nuclease with 5'-flap endonuclease and 5'-3' exonuclease activities involved in DNA replication and repair. During DNA replication, cleaves the 5'-overhanging flap structure that is generated by displacement synthesis when DNA polymerase encounters the 5'-end of a downstream Okazaki fragment. It enters the flap from the 5'-end and then tracks to cleave the flap base, leaving a nick for ligation. Also involved in the long patch base excision repair (LP-BER) pathway, by cleaving within the apurinic/apyrimidinic (AP) site-terminated flap. Acts as a genome stabilization factor that prevents flaps from equilibrating into structures that lead to duplications and deletions. Also possesses 5'-3' exonuclease activity on nicked or gapped double-stranded DNA, and exhibits RNase H activity. Also involved in replication and repair of rDNA and in repairing mitochondrial DNA. The sequence is that of Flap endonuclease 1 from Drosophila simulans (Fruit fly).